Here is a 464-residue protein sequence, read N- to C-terminus: UDP-N-acetylmuramoyl-tripeptide--D-alanyl-D-alanine ligase (464 aa).

125–131 serves as a coordination point for ATP; sequence GSNGKTT.

It belongs to the MurCDEF family. MurF subfamily.

Its subcellular location is the cytoplasm. The enzyme catalyses D-alanyl-D-alanine + UDP-N-acetyl-alpha-D-muramoyl-L-alanyl-gamma-D-glutamyl-meso-2,6-diaminopimelate + ATP = UDP-N-acetyl-alpha-D-muramoyl-L-alanyl-gamma-D-glutamyl-meso-2,6-diaminopimeloyl-D-alanyl-D-alanine + ADP + phosphate + H(+). It participates in cell wall biogenesis; peptidoglycan biosynthesis. Its function is as follows. Involved in cell wall formation. Catalyzes the final step in the synthesis of UDP-N-acetylmuramoyl-pentapeptide, the precursor of murein. The protein is UDP-N-acetylmuramoyl-tripeptide--D-alanyl-D-alanine ligase of Borreliella burgdorferi (strain ATCC 35210 / DSM 4680 / CIP 102532 / B31) (Borrelia burgdorferi).